The following is a 544-amino-acid chain: Methionine--tRNA ligase (544 aa).

Residues 10-20 (PYANGSLHLGH) carry the 'HIGH' region motif. 4 residues coordinate Zn(2+): Cys141, Cys144, Cys153, and Cys156. The 'KMSKS' region signature appears at 329–333 (KLSTS). Thr332 contributes to the ATP binding site.

The protein belongs to the class-I aminoacyl-tRNA synthetase family. MetG type 1 subfamily. In terms of assembly, monomer. The cofactor is Zn(2+).

Its subcellular location is the cytoplasm. The enzyme catalyses tRNA(Met) + L-methionine + ATP = L-methionyl-tRNA(Met) + AMP + diphosphate. In terms of biological role, is required not only for elongation of protein synthesis but also for the initiation of all mRNA translation through initiator tRNA(fMet) aminoacylation. The protein is Methionine--tRNA ligase of Bacillus mycoides (strain KBAB4) (Bacillus weihenstephanensis).